A 481-amino-acid chain; its full sequence is F-box/FBD/LRR-repeat protein At5g18770 (481 aa).

Residues 23 to 69 form the F-box domain; the sequence is EDMISALPDHLLCHILIFLSTDESVLTSVLSSRWRNLWKWVPRLDLN. 7 LRR repeats span residues 126-153, 159-185, 186-211, 214-234, 236-261, 289-314, and 340-368; these read KPNV…TLSA, CLKL…YLED, VVFP…KLSL, DDVV…TLKR, VPVY…SLID, DELS…TISW, and ATMS…HFTL. Residues 378-430 form the FBD domain; that stretch reads VITGFSRVLPRCLVFSLESVEMESPITEKATELKLVRYFLENSATLKKLVLLL.

The polypeptide is F-box/FBD/LRR-repeat protein At5g18770 (Arabidopsis thaliana (Mouse-ear cress)).